Here is a 440-residue protein sequence, read N- to C-terminus: MSYSLYLAFVCLNLLAQRMCIQGNQFNVEVSRSDKLSLPGFENLTAGYNKFLRPNFGGDPVRIALTLDIASISSISESNMDYTATIYLRQRWTDPRLVFEGNKSFTLDARLVEFLWVPDTYIVESKKSFLHEVTVGNRLIRLFSNGTVLYALRITTTVTCNMDLSKYPMDTQTCKLQLESWGYDGNDVEFSWLRGNDSVRGLENLRLAQYTIQQYFTLVTVSQQETGNYTRLVLQFELRRNVLYFILETYVPSTFLVVLSWVSFWISLESVPARTCIGVTTVLSMTTLMIGSRTSLPNTNCFIKAIDVYLGICFSFVFGALLEYAVAHYSSLQQMAVKDRGPAKDSEEVNITNIINSSISSFKRKISFASIEISGDNVNYSDLTMKASDKFKFVFREKIGRIIDYFTIQNPSNVDRYSKLLFPLIFMLANVFYWAYYMYF.

The N-terminal stretch at Met1 to Gly23 is a signal peptide. Residues Asn24–Asn241 lie on the Extracellular side of the membrane. 3 N-linked (GlcNAc...) asparagine glycosylation sites follow: Asn43, Asn102, and Asn145. A disulfide bridge connects residues Cys160 and Cys174. Asn196 and Asn228 each carry an N-linked (GlcNAc...) asparagine glycan. The helical transmembrane segment at Val242 to Val262 threads the bilayer. Residues Ser263–Ser270 lie on the Cytoplasmic side of the membrane. A helical membrane pass occupies residues Val271 to Ile290. The Extracellular portion of the chain corresponds to Gly291 to Cys301. A helical transmembrane segment spans residues Phe302 to Leu322. Topologically, residues Glu323–Lys419 are cytoplasmic. Residues Leu420–Phe440 form a helical membrane-spanning segment.

Belongs to the ligand-gated ion channel (TC 1.A.9) family. Gamma-aminobutyric acid receptor (TC 1.A.9.5) subfamily. GABRP sub-subfamily. As to quaternary structure, heteropentamer, formed by a combination of alpha (GABRA1-6), beta (GABRB1-3), gamma (GABRG1-3), delta (GABRD), epsilon (GABRE), rho (GABRR1-3), pi (GABRP) and theta (GABRQ) chains, each subunit exhibiting distinct physiological and pharmacological properties. As to expression, expressed in lungs, in alveolar epithelium.

The protein localises to the cell membrane. The protein resides in the apical cell membrane. It carries out the reaction chloride(in) = chloride(out). Functionally, pi subunit of the heteropentameric ligand-gated chloride channel gated by gamma-aminobutyric acid (GABA). GABA-gated chloride channels, also named GABA(A) receptors (GABAAR), consist of five subunits arranged around a central pore and contain GABA active binding site(s) located at the alpha and beta subunit interfaces. When activated by GABA, GABAARs selectively allow the flow of chloride anions across the cell membrane down their electrochemical gradient. Pi-containing GABAARs are mostly located in peripheral tissues. In the uterus, pi subunits modulate uterus contraction by altering the sensitivity of GABAARs to pregnanolone. In the lungs, pi-containing GABAARs contribute to pulmonary fluid transport via luminal secretion of chloride. This is Gamma-aminobutyric acid receptor subunit pi from Rattus norvegicus (Rat).